The primary structure comprises 490 residues: ATP synthase subunit beta (490 aa).

Position 173 to 180 (173 to 180) interacts with ATP; it reads GGAGVGKT.

It belongs to the ATPase alpha/beta chains family. In terms of assembly, F-type ATPases have 2 components, CF(1) - the catalytic core - and CF(0) - the membrane proton channel. CF(1) has five subunits: alpha(3), beta(3), gamma(1), delta(1), epsilon(1). CF(0) has three main subunits: a(1), b(2) and c(9-12). The alpha and beta chains form an alternating ring which encloses part of the gamma chain. CF(1) is attached to CF(0) by a central stalk formed by the gamma and epsilon chains, while a peripheral stalk is formed by the delta and b chains.

It localises to the cell membrane. It carries out the reaction ATP + H2O + 4 H(+)(in) = ADP + phosphate + 5 H(+)(out). In terms of biological role, produces ATP from ADP in the presence of a proton gradient across the membrane. The catalytic sites are hosted primarily by the beta subunits. This chain is ATP synthase subunit beta, found in Bifidobacterium longum (strain DJO10A).